The sequence spans 266 residues: Putative tyrosine phosphatase 197R (266 aa).

Positions 15 to 167 constitute a Tyrosine-protein phosphatase domain; it reads RPTLGSLSDK…LFGSQNINND (153 aa). C111 functions as the Phosphocysteine intermediate in the catalytic mechanism.

This sequence belongs to the protein-tyrosine phosphatase family.

The enzyme catalyses O-phospho-L-tyrosyl-[protein] + H2O = L-tyrosyl-[protein] + phosphate. This chain is Putative tyrosine phosphatase 197R, found in Invertebrate iridescent virus 6 (IIV-6).